The chain runs to 396 residues: Elongation factor Tu (396 aa).

The tr-type G domain occupies 10 to 206 (KPHVNVGTIG…ALDTYIPLPE (197 aa)). The interval 19 to 26 (GHVDHGKT) is G1. Position 19-26 (19-26 (GHVDHGKT)) interacts with GTP. T26 provides a ligand contact to Mg(2+). The interval 60–64 (GITIN) is G2. Positions 81–84 (DCPG) are G3. Residues 81-85 (DCPGH) and 136-139 (NKCD) contribute to the GTP site. The interval 136-139 (NKCD) is G4. Residues 174–176 (SAK) are G5.

The protein belongs to the TRAFAC class translation factor GTPase superfamily. Classic translation factor GTPase family. EF-Tu/EF-1A subfamily. Monomer.

Its subcellular location is the cytoplasm. It carries out the reaction GTP + H2O = GDP + phosphate + H(+). Functionally, GTP hydrolase that promotes the GTP-dependent binding of aminoacyl-tRNA to the A-site of ribosomes during protein biosynthesis. This chain is Elongation factor Tu, found in Polaromonas sp. (strain JS666 / ATCC BAA-500).